The primary structure comprises 640 residues: Threonine--tRNA ligase (640 aa).

The 61-residue stretch at 1 to 61 folds into the TGS domain; that stretch reads MPIITLPNGD…TEDSTLQIIT (61 aa). The segment at 242–533 is catalytic; it reads DHRKIGKALD…LIEHYAGFMP (292 aa). Zn(2+) contacts are provided by cysteine 333, histidine 384, and histidine 510.

It belongs to the class-II aminoacyl-tRNA synthetase family. As to quaternary structure, homodimer. Zn(2+) is required as a cofactor.

The protein resides in the cytoplasm. It catalyses the reaction tRNA(Thr) + L-threonine + ATP = L-threonyl-tRNA(Thr) + AMP + diphosphate + H(+). Catalyzes the attachment of threonine to tRNA(Thr) in a two-step reaction: L-threonine is first activated by ATP to form Thr-AMP and then transferred to the acceptor end of tRNA(Thr). Also edits incorrectly charged L-seryl-tRNA(Thr). This chain is Threonine--tRNA ligase, found in Acinetobacter baumannii (strain AB307-0294).